The sequence spans 355 residues: tRNA N6-adenosine threonylcarbamoyltransferase (355 aa).

Positions 113 and 117 each coordinate Fe cation. Residues 135-139, aspartate 168, glycine 181, and asparagine 279 each bind substrate; that span reads LASGG. A Fe cation-binding site is contributed by aspartate 307.

The protein belongs to the KAE1 / TsaD family. Requires Fe(2+) as cofactor.

The protein localises to the cytoplasm. The catalysed reaction is L-threonylcarbamoyladenylate + adenosine(37) in tRNA = N(6)-L-threonylcarbamoyladenosine(37) in tRNA + AMP + H(+). Functionally, required for the formation of a threonylcarbamoyl group on adenosine at position 37 (t(6)A37) in tRNAs that read codons beginning with adenine. Is involved in the transfer of the threonylcarbamoyl moiety of threonylcarbamoyl-AMP (TC-AMP) to the N6 group of A37, together with TsaE and TsaB. TsaD likely plays a direct catalytic role in this reaction. The protein is tRNA N6-adenosine threonylcarbamoyltransferase of Bradyrhizobium sp. (strain BTAi1 / ATCC BAA-1182).